Consider the following 100-residue polypeptide: Small ribosomal subunit protein uS14c (100 aa).

The protein belongs to the universal ribosomal protein uS14 family. As to quaternary structure, part of the 30S ribosomal subunit.

The protein localises to the plastid. It localises to the chloroplast. In terms of biological role, binds 16S rRNA, required for the assembly of 30S particles. The chain is Small ribosomal subunit protein uS14c from Physcomitrium patens (Spreading-leaved earth moss).